The chain runs to 295 residues: ATP synthase gamma chain (295 aa).

Belongs to the ATPase gamma chain family. In terms of assembly, F-type ATPases have 2 components, CF(1) - the catalytic core - and CF(0) - the membrane proton channel. CF(1) has five subunits: alpha(3), beta(3), gamma(1), delta(1), epsilon(1). CF(0) has three main subunits: a, b and c.

The protein resides in the cell membrane. In terms of biological role, produces ATP from ADP in the presence of a proton gradient across the membrane. The gamma chain is believed to be important in regulating ATPase activity and the flow of protons through the CF(0) complex. The chain is ATP synthase gamma chain from Herpetosiphon aurantiacus (strain ATCC 23779 / DSM 785 / 114-95).